The sequence spans 562 residues: Dihydroxy-acid dehydratase (562 aa).

Residue Asp-80 coordinates Mg(2+). Cys-121 provides a ligand contact to [2Fe-2S] cluster. Mg(2+) is bound by residues Asp-122 and Lys-123. Lys-123 is modified (N6-carboxylysine). Position 194 (Cys-194) interacts with [2Fe-2S] cluster. Glu-446 lines the Mg(2+) pocket. Ser-472 functions as the Proton acceptor in the catalytic mechanism.

This sequence belongs to the IlvD/Edd family. As to quaternary structure, homodimer. The cofactor is [2Fe-2S] cluster. Requires Mg(2+) as cofactor.

The enzyme catalyses (2R)-2,3-dihydroxy-3-methylbutanoate = 3-methyl-2-oxobutanoate + H2O. It carries out the reaction (2R,3R)-2,3-dihydroxy-3-methylpentanoate = (S)-3-methyl-2-oxopentanoate + H2O. It participates in amino-acid biosynthesis; L-isoleucine biosynthesis; L-isoleucine from 2-oxobutanoate: step 3/4. Its pathway is amino-acid biosynthesis; L-valine biosynthesis; L-valine from pyruvate: step 3/4. Functions in the biosynthesis of branched-chain amino acids. Catalyzes the dehydration of (2R,3R)-2,3-dihydroxy-3-methylpentanoate (2,3-dihydroxy-3-methylvalerate) into 2-oxo-3-methylpentanoate (2-oxo-3-methylvalerate) and of (2R)-2,3-dihydroxy-3-methylbutanoate (2,3-dihydroxyisovalerate) into 2-oxo-3-methylbutanoate (2-oxoisovalerate), the penultimate precursor to L-isoleucine and L-valine, respectively. The sequence is that of Dihydroxy-acid dehydratase from Staphylococcus haemolyticus (strain JCSC1435).